We begin with the raw amino-acid sequence, 235 residues long: MLKLIDITWLYHHLPMRFTLAVERGEQVAILGPSGAGKSTLLNLIAGFLAPASGTLLIAGDDHTLTPPSRRPVSMLFQENNLFSHLNVQQNIGLGLNPGLTLNASQREKRDAIAHQMGIESLMTRLPGELSGGQRQRVALARCLVREQPVLLLDEPFSALDPALRQEMLTLVSDICRERQLTLLMVSHSVEDAARIAPRSIVVADGRIAWQGKTDELLSGQASASALLGIKSHIL.

Residues 2 to 230 (LKLIDITWLY…QASASALLGI (229 aa)) form the ABC transporter domain. 32 to 39 (GPSGAGKS) is an ATP binding site.

This sequence belongs to the ABC transporter superfamily. Thiamine importer (TC 3.A.1.19.1) family. The complex is composed of two ATP-binding proteins (ThiQ), two transmembrane proteins (ThiP) and a solute-binding protein (ThiB).

Its subcellular location is the cell inner membrane. It carries out the reaction thiamine(out) + ATP + H2O = thiamine(in) + ADP + phosphate + H(+). Functionally, part of the ABC transporter complex ThiBPQ involved in thiamine import. Responsible for energy coupling to the transport system. Is also involved in thiamine pyrophosphate (TPP) transport. This is Thiamine import ATP-binding protein ThiQ from Salmonella typhimurium (strain LT2 / SGSC1412 / ATCC 700720).